The primary structure comprises 42 residues: Potassium channel toxin gamma-KTx 1.2 (42 aa).

Cystine bridges form between C5-C23, C11-C34, C20-C39, and C24-C41.

It belongs to the ergtoxin family. Gamma-KTx 1 subfamily. In terms of tissue distribution, expressed by the venom gland.

It localises to the secreted. Its function is as follows. Blocks Kv11/ERG potassium channels. The protein is Potassium channel toxin gamma-KTx 1.2 of Centruroides elegans (Bark scorpion).